We begin with the raw amino-acid sequence, 166 residues long: Mitochondrial fission process protein 1 (166 aa).

3 helical membrane-spanning segments follow: residues 33-53 (SLVK…YVAA), 78-98 (AIAA…IPGF), and 125-145 (TVTC…DSFV).

It belongs to the MTFP1 family.

It is found in the mitochondrion inner membrane. Involved in the mitochondrial division probably by regulating membrane fission. Loss-of-function leads to apoptosis. The sequence is that of Mitochondrial fission process protein 1 (mtp-18) from Caenorhabditis elegans.